Consider the following 237-residue polypeptide: Thiamine-phosphate synthase (237 aa).

4-amino-2-methyl-5-(diphosphooxymethyl)pyrimidine-binding positions include 57–61 (QLRDK) and asparagine 98. Residues aspartate 99 and aspartate 118 each coordinate Mg(2+). Serine 136 serves as a coordination point for 4-amino-2-methyl-5-(diphosphooxymethyl)pyrimidine. Position 162-164 (162-164 (TPT)) interacts with 2-[(2R,5Z)-2-carboxy-4-methylthiazol-5(2H)-ylidene]ethyl phosphate. Residue lysine 165 coordinates 4-amino-2-methyl-5-(diphosphooxymethyl)pyrimidine. Glycine 193 lines the 2-[(2R,5Z)-2-carboxy-4-methylthiazol-5(2H)-ylidene]ethyl phosphate pocket.

Belongs to the thiamine-phosphate synthase family. Mg(2+) serves as cofactor.

It catalyses the reaction 2-[(2R,5Z)-2-carboxy-4-methylthiazol-5(2H)-ylidene]ethyl phosphate + 4-amino-2-methyl-5-(diphosphooxymethyl)pyrimidine + 2 H(+) = thiamine phosphate + CO2 + diphosphate. The enzyme catalyses 2-(2-carboxy-4-methylthiazol-5-yl)ethyl phosphate + 4-amino-2-methyl-5-(diphosphooxymethyl)pyrimidine + 2 H(+) = thiamine phosphate + CO2 + diphosphate. The catalysed reaction is 4-methyl-5-(2-phosphooxyethyl)-thiazole + 4-amino-2-methyl-5-(diphosphooxymethyl)pyrimidine + H(+) = thiamine phosphate + diphosphate. It functions in the pathway cofactor biosynthesis; thiamine diphosphate biosynthesis; thiamine phosphate from 4-amino-2-methyl-5-diphosphomethylpyrimidine and 4-methyl-5-(2-phosphoethyl)-thiazole: step 1/1. Its function is as follows. Condenses 4-methyl-5-(beta-hydroxyethyl)thiazole monophosphate (THZ-P) and 2-methyl-4-amino-5-hydroxymethyl pyrimidine pyrophosphate (HMP-PP) to form thiamine monophosphate (TMP). This chain is Thiamine-phosphate synthase, found in Mycolicibacterium gilvum (strain PYR-GCK) (Mycobacterium gilvum (strain PYR-GCK)).